The following is a 179-amino-acid chain: ATP synthase subunit delta (179 aa).

Belongs to the ATPase delta chain family. F-type ATPases have 2 components, F(1) - the catalytic core - and F(0) - the membrane proton channel. F(1) has five subunits: alpha(3), beta(3), gamma(1), delta(1), epsilon(1). F(0) has three main subunits: a(1), b(2) and c(10-14). The alpha and beta chains form an alternating ring which encloses part of the gamma chain. F(1) is attached to F(0) by a central stalk formed by the gamma and epsilon chains, while a peripheral stalk is formed by the delta and b chains.

It localises to the cell inner membrane. Functionally, f(1)F(0) ATP synthase produces ATP from ADP in the presence of a proton or sodium gradient. F-type ATPases consist of two structural domains, F(1) containing the extramembraneous catalytic core and F(0) containing the membrane proton channel, linked together by a central stalk and a peripheral stalk. During catalysis, ATP synthesis in the catalytic domain of F(1) is coupled via a rotary mechanism of the central stalk subunits to proton translocation. This protein is part of the stalk that links CF(0) to CF(1). It either transmits conformational changes from CF(0) to CF(1) or is implicated in proton conduction. The sequence is that of ATP synthase subunit delta from Maricaulis maris (strain MCS10) (Caulobacter maris).